The following is a 478-amino-acid chain: Methionine aminopeptidase 2 (478 aa).

The interval 1-122 (MAGVEEVAAS…TDPPSVPICD (122 aa)) is disordered. Ala2 bears the N-acetylalanine mark. Residues 36–46 (KKKRRKKKKSK) show a composition bias toward basic residues. Phosphoserine is present on Ser45. Positions 55 to 79 (EPDKESGASVDEVARQLERSALEDK) are enriched in basic and acidic residues. A phosphoserine; alternate mark is found at Ser60 and Ser63. 2 O-linked (GlcNAc) serine; alternate glycosylation sites follow: Ser60 and Ser63. Ser74 is subject to Phosphoserine. The segment covering 80-92 (ERDEDDEDGDGDG) has biased composition (acidic residues). Positions 97–109 (GKKKKKKKKKRGP) are enriched in basic residues. Residue His231 participates in substrate binding. Residues Asp251, Asp262, and His331 each contribute to the a divalent metal cation site. His339 serves as a coordination point for substrate. 2 residues coordinate a divalent metal cation: Glu364 and Glu459.

It belongs to the peptidase M24A family. Methionine aminopeptidase eukaryotic type 2 subfamily. Interacts strongly with the eIF-2 gamma-subunit EIF2S3. Binds EIF2S1 at low magnesium concentrations. Co(2+) serves as cofactor. Requires Zn(2+) as cofactor. It depends on Mn(2+) as a cofactor. Fe(2+) is required as a cofactor. Contains approximately 12 O-linked N-acetylglucosamine (GlcNAc) residues. O-glycosylation is required for EIF2S1 binding.

Its subcellular location is the cytoplasm. The enzyme catalyses Release of N-terminal amino acids, preferentially methionine, from peptides and arylamides.. Cotranslationally removes the N-terminal methionine from nascent proteins. The N-terminal methionine is often cleaved when the second residue in the primary sequence is small and uncharged (Met-Ala-, Cys, Gly, Pro, Ser, Thr, or Val). The catalytic activity of human METAP2 toward Met-Val peptides is consistently two orders of magnitude higher than that of METAP1, suggesting that it is responsible for processing proteins containing N-terminal Met-Val and Met-Thr sequences in vivo. Functionally, protects eukaryotic initiation factor EIF2S1 from translation-inhibiting phosphorylation by inhibitory kinases such as EIF2AK2/PKR and EIF2AK1/HCR. Plays a critical role in the regulation of protein synthesis. In Homo sapiens (Human), this protein is Methionine aminopeptidase 2.